A 435-amino-acid chain; its full sequence is Methylenetetrahydrofolate--tRNA-(uracil-5-)-methyltransferase TrmFO (435 aa).

Glycine 9 to glycine 14 lines the FAD pocket.

Belongs to the MnmG family. TrmFO subfamily. It depends on FAD as a cofactor.

The protein resides in the cytoplasm. It carries out the reaction uridine(54) in tRNA + (6R)-5,10-methylene-5,6,7,8-tetrahydrofolate + NADH + H(+) = 5-methyluridine(54) in tRNA + (6S)-5,6,7,8-tetrahydrofolate + NAD(+). The catalysed reaction is uridine(54) in tRNA + (6R)-5,10-methylene-5,6,7,8-tetrahydrofolate + NADPH + H(+) = 5-methyluridine(54) in tRNA + (6S)-5,6,7,8-tetrahydrofolate + NADP(+). In terms of biological role, catalyzes the folate-dependent formation of 5-methyl-uridine at position 54 (M-5-U54) in all tRNAs. The sequence is that of Methylenetetrahydrofolate--tRNA-(uracil-5-)-methyltransferase TrmFO from Enterococcus faecalis (strain ATCC 700802 / V583).